A 448-amino-acid chain; its full sequence is MDHQEPYSVQATAAIAAVITFLILFTIFGNALVILAVLTSRSLPAPQNLFLVSLAAADILVATLIIPFSLANELLGYWYFWRTWCEVYLALDVLFCTSSIVHLCAISLDRYWAVSRALEYNSKRTPRRIKCIILTVWLIAAVISLPPLIYKGDQGPSPRGPQCKINQEAWYILASSIGSFFAPCLIMILVYLRIYLIAKRSHRRGPRAKGGPGEGESKESRPSPGGAPASAKVPPLASPLSSTGEANGHPKPTGEKEEGETSEDPGARTLPPSWAALPTSGQGQKKAVVLAPAEEEAEEEEEEEGDECEPQAAPGLPASMCSPSLQQPQGSRVLATLRGQVLLGRGVGAVDGQWWRRRTQMTREKRFTFVLAVVIGVFVLCWFPFFFTYSLGAICPQHCKVPHGLFQFFFWIGYCNSSLNPVIYTIFNQDFRRAFRRILCRQWTQTAW.

The Extracellular segment spans residues 1-12 (MDHQEPYSVQAT). A helical membrane pass occupies residues 13–38 (AAIAAVITFLILFTIFGNALVILAVL). Residues 39-49 (TSRSLPAPQNL) are Cytoplasmic-facing. A helical membrane pass occupies residues 50-75 (FLVSLAAADILVATLIIPFSLANELL). Residues 76–85 (GYWYFWRTWC) are Extracellular-facing. C85 and C163 are oxidised to a cystine. The chain crosses the membrane as a helical span at residues 86–108 (EVYLALDVLFCTSSIVHLCAISL). Residues 109 to 130 (DRYWAVSRALEYNSKRTPRRIK) lie on the Cytoplasmic side of the membrane. Residues 131–153 (CIILTVWLIAAVISLPPLIYKGD) traverse the membrane as a helical segment. The Extracellular segment spans residues 154–168 (QGPSPRGPQCKINQE). The helical transmembrane segment at 169–192 (AWYILASSIGSFFAPCLIMILVYL) threads the bilayer. Residues 193–370 (RIYLIAKRSH…MTREKRFTFV (178 aa)) are Cytoplasmic-facing. The segment at 203–326 (RRGPRAKGGP…PASMCSPSLQ (124 aa)) is disordered. Acidic residues predominate over residues 293 to 309 (AEEEAEEEEEEEGDECE). Residues 371 to 394 (LAVVIGVFVLCWFPFFFTYSLGAI) form a helical membrane-spanning segment. The Extracellular portion of the chain corresponds to 395-403 (CPQHCKVPH). A helical membrane pass occupies residues 404-427 (GLFQFFFWIGYCNSSLNPVIYTIF). At 428–448 (NQDFRRAFRRILCRQWTQTAW) the chain is on the cytoplasmic side. Residue C440 is the site of S-palmitoyl cysteine attachment.

Belongs to the G-protein coupled receptor 1 family. Adrenergic receptor subfamily. ADRA2B sub-subfamily. Interacts with RAB26. Interacts with PPP1R9B.

It is found in the cell membrane. Functionally, alpha-2 adrenergic receptors mediate the catecholamine-induced inhibition of adenylate cyclase through the action of G proteins. This Cavia porcellus (Guinea pig) protein is Alpha-2B adrenergic receptor (ADRA2B).